We begin with the raw amino-acid sequence, 339 residues long: Lipopolysaccharide 1,2-glucosyltransferase (339 aa).

UDP is bound by residues glycine 35–tyrosine 40 and aspartate 132–alanine 133. The Mg(2+) site is built by aspartate 132 and aspartate 134. 2 short sequence motifs (DXD) span residues aspartate 132–aspartate 134 and aspartate 219–aspartate 221. Residue histidine 268 participates in Mg(2+) binding. Histidine 268–lysine 274 is a binding site for UDP.

Belongs to the glycosyltransferase 8 family. Mg(2+) is required as a cofactor.

It localises to the cell inner membrane. The catalysed reaction is UDP-glucose + [lipopolysaccharide] = UDP + D-glucosyl-[lipopolysaccharide].. It participates in bacterial outer membrane biogenesis; LPS core biosynthesis. Glucosyltransferase involved in the biosynthesis of the core oligosaccharide region of lipopolysaccharide (LPS). Catalyzes the addition of a glucose (glucose II) to the outer-core galactose I. Has a marked preference for its specific donor substrate, but it appears to have a relaxed specificity for alternate LPS acceptor residues, providing the overall size of the acceptor is conserved. This chain is Lipopolysaccharide 1,2-glucosyltransferase, found in Escherichia coli.